The primary structure comprises 343 residues: Tetraacyldisaccharide 4'-kinase (343 aa).

Residue 51 to 58 (HGGGAGKT) coordinates ATP.

It belongs to the LpxK family.

It catalyses the reaction a lipid A disaccharide + ATP = a lipid IVA + ADP + H(+). It participates in glycolipid biosynthesis; lipid IV(A) biosynthesis; lipid IV(A) from (3R)-3-hydroxytetradecanoyl-[acyl-carrier-protein] and UDP-N-acetyl-alpha-D-glucosamine: step 6/6. Functionally, transfers the gamma-phosphate of ATP to the 4'-position of a tetraacyldisaccharide 1-phosphate intermediate (termed DS-1-P) to form tetraacyldisaccharide 1,4'-bis-phosphate (lipid IVA). This is Tetraacyldisaccharide 4'-kinase from Rhodopseudomonas palustris (strain BisB18).